Consider the following 503-residue polypeptide: Type II secretion system ATPase E (503 aa).

Zn(2+) contacts are provided by Cys-397, Cys-400, Cys-430, and Cys-433.

It belongs to the GSP E family. In terms of assembly, forms homooligomers; most probably hexamers. Interacts with EpsL/GspL. Zn(2+) is required as a cofactor.

Its subcellular location is the cell inner membrane. It carries out the reaction ATP + H2O + cellular proteinSide 1 = ADP + phosphate + cellular proteinSide 2.. In terms of biological role, ATPase component of the type II secretion system required for the energy-dependent secretion of extracellular factors such as proteases and toxins from the periplasm. Acts as a molecular motor to provide the energy that is required for assembly of the pseudopilus and the extrusion of substrates generated in the cytoplasm. The protein is Type II secretion system ATPase E (epsE) of Vibrio cholerae serotype O1 (strain ATCC 39315 / El Tor Inaba N16961).